Here is a 495-residue protein sequence, read N- to C-terminus: Tyrosine 3-monooxygenase (495 aa).

Ser19 carries the post-translational modification Phosphoserine; by CaMK2. Ser31 is subject to Phosphoserine. The residue at position 40 (Ser40) is a Phosphoserine; by CaMK2 and PKA. Residues 41–53 (LIEDARKEREKAE) show a composition bias toward basic and acidic residues. The tract at residues 41 to 65 (LIEDARKEREKAEAASAASSEPGDL) is disordered. Residues His328, His333, and Glu373 each coordinate Fe cation. At Ser469 the chain carries Phosphoserine.

The protein belongs to the biopterin-dependent aromatic amino acid hydroxylase family. As to quaternary structure, homotetramer. Interacts (when phosphorylated at Ser-19) with YWHAG; one YWHAG dimer bounds to one TH tetramer this interaction may influence the phosphorylation and dephosphorylation of other sites. Fe(2+) is required as a cofactor. Phosphorylated on Ser-19, Ser-31 and Ser-40 by several protein kinases with different site specificities. Phosphorylation at Ser-31 and Ser-40 leads to an increase of TH activity. Phosphorylation at Ser-40 activates the enzyme and also counteracts the feedback inhibition of TH by catecholamines. Phosphorylation of Ser-19 and Ser-31 triggers the proteasomal degradation of TH through the ubiquitin-proteasome pathway. Phosphorylation at Ser-31 facilitates transport of TH from the soma to the nerve terminals via the microtubule network. Phosphorylation at Ser-19 induces the high-affinity binding to the 14-3-3 protein YWHAG; this interaction may influence the phosphorylation and dephosphorylation of other sites. Ser-19 increases the phosphorylation at Ser-40 in a hierarchical manner, leading to increased activity.

The protein resides in the cytoplasm. It localises to the perinuclear region. Its subcellular location is the nucleus. The protein localises to the cell projection. It is found in the axon. The protein resides in the cytoplasmic vesicle. It localises to the secretory vesicle. Its subcellular location is the synaptic vesicle. The enzyme catalyses (6R)-L-erythro-5,6,7,8-tetrahydrobiopterin + L-tyrosine + O2 = (4aS,6R)-4a-hydroxy-L-erythro-5,6,7,8-tetrahydrobiopterin + L-dopa. It functions in the pathway catecholamine biosynthesis; dopamine biosynthesis; dopamine from L-tyrosine: step 1/2. With respect to regulation, inhibited in feedback fashion by the catecholamine neurotransmitters, especially by dopamine in competition with tetrahydrobiopterin. Phosphorylation of several Ser/Thr residues in the N-terminus regulates the catalytic activity. Ser-31 and Ser-40 are readily phosphorylated to activate the catalytic activity. A Cysteine modification induced by N-ethylmaleimide (NEM), inhibits tyrosine 3-monooxygenase activity through the modification of the Cys-174. Catalyzes the conversion of L-tyrosine to L-dihydroxyphenylalanine (L-Dopa), the rate-limiting step in the biosynthesis of cathecolamines, dopamine, noradrenaline, and adrenaline. Uses tetrahydrobiopterin and molecular oxygen to convert tyrosine to L-Dopa. In addition to tyrosine, is able to catalyze the hydroxylation of phenylalanine and tryptophan with lower specificity. Positively regulates the regression of retinal hyaloid vessels during postnatal development. The polypeptide is Tyrosine 3-monooxygenase (TH) (Canis lupus familiaris (Dog)).